Consider the following 568-residue polypeptide: Oxygen-dependent choline dehydrogenase (568 aa).

8–37 (DYIIIGAGSAGNTLAARLTEDAGVTVLLLE) serves as a coordination point for FAD. Histidine 477 acts as the Proton acceptor in catalysis.

Belongs to the GMC oxidoreductase family. Requires FAD as cofactor.

The catalysed reaction is choline + A = betaine aldehyde + AH2. It carries out the reaction betaine aldehyde + NAD(+) + H2O = glycine betaine + NADH + 2 H(+). It functions in the pathway amine and polyamine biosynthesis; betaine biosynthesis via choline pathway; betaine aldehyde from choline (cytochrome c reductase route): step 1/1. In terms of biological role, involved in the biosynthesis of the osmoprotectant glycine betaine. Catalyzes the oxidation of choline to betaine aldehyde and betaine aldehyde to glycine betaine at the same rate. This Pseudomonas syringae pv. tomato (strain ATCC BAA-871 / DC3000) protein is Oxygen-dependent choline dehydrogenase.